The sequence spans 289 residues: 5'-adenylylsulfate reductase-like 7 (289 aa).

A signal peptide spans 1-23 (MNLWVSIFLVSAIAGSCLPSGFA). The Thioredoxin domain maps to 37–157 (SVIEQKCPRS…LIQFYKETTG (121 aa)). Asn132 and Asn184 each carry an N-linked (GlcNAc...) asparagine glycan. A helical membrane pass occupies residues 198-218 (MVLALMFLSLKLAILIFPIMG).

It localises to the membrane. The protein is 5'-adenylylsulfate reductase-like 7 (APRL7) of Arabidopsis thaliana (Mouse-ear cress).